A 381-amino-acid polypeptide reads, in one-letter code: Probable tRNA sulfurtransferase (381 aa).

The 104-residue stretch at Glu57–Ile160 folds into the THUMP domain. ATP is bound by residues Met177 to Leu178, Tyr202 to Phe203, Arg259, Gly281, and Gln290.

This sequence belongs to the ThiI family.

It localises to the cytoplasm. It carries out the reaction [ThiI sulfur-carrier protein]-S-sulfanyl-L-cysteine + a uridine in tRNA + 2 reduced [2Fe-2S]-[ferredoxin] + ATP + H(+) = [ThiI sulfur-carrier protein]-L-cysteine + a 4-thiouridine in tRNA + 2 oxidized [2Fe-2S]-[ferredoxin] + AMP + diphosphate. It catalyses the reaction [ThiS sulfur-carrier protein]-C-terminal Gly-Gly-AMP + S-sulfanyl-L-cysteinyl-[cysteine desulfurase] + AH2 = [ThiS sulfur-carrier protein]-C-terminal-Gly-aminoethanethioate + L-cysteinyl-[cysteine desulfurase] + A + AMP + 2 H(+). Its pathway is cofactor biosynthesis; thiamine diphosphate biosynthesis. In terms of biological role, catalyzes the ATP-dependent transfer of a sulfur to tRNA to produce 4-thiouridine in position 8 of tRNAs, which functions as a near-UV photosensor. Also catalyzes the transfer of sulfur to the sulfur carrier protein ThiS, forming ThiS-thiocarboxylate. This is a step in the synthesis of thiazole, in the thiamine biosynthesis pathway. The sulfur is donated as persulfide by IscS. The polypeptide is Probable tRNA sulfurtransferase (Clostridium kluyveri (strain NBRC 12016)).